The sequence spans 228 residues: Glyceraldehyde 3-phosphate phosphatase (228 aa).

The protein belongs to the HAD-like hydrolase superfamily. It depends on Mg(2+) as a cofactor.

Functionally, catalyzes the dephosphorylation of D,L-glyceraldehyde 3-phosphate in vitro. The chain is Glyceraldehyde 3-phosphate phosphatase from Methanocaldococcus jannaschii (strain ATCC 43067 / DSM 2661 / JAL-1 / JCM 10045 / NBRC 100440) (Methanococcus jannaschii).